Reading from the N-terminus, the 205-residue chain is IQ domain-containing protein F1 (205 aa).

2 stretches are compositionally biased toward basic and acidic residues: residues 1–24 (MEEK…KEMP) and 51–68 (ANEK…LSDK). The tract at residues 1-68 (MEEKQPQKTK…PENQKKLSDK (68 aa)) is disordered. IQ domains follow at residues 68–97 (KDTV…SACI) and 124–153 (KEWA…AVRI).

As to quaternary structure, interacts with calmodulin.

It is found in the cytoplasmic vesicle. The protein localises to the secretory vesicle. Its subcellular location is the acrosome. Its function is as follows. Involved in sperm capacitation and acrosome reaction. The protein is IQ domain-containing protein F1 of Homo sapiens (Human).